We begin with the raw amino-acid sequence, 80 residues long: FXYD domain-containing ion transport regulator 7 (80 aa).

At 1 to 23 the chain is on the extracellular side; sequence MATPTQTPTKAPEEPDPFYYDYN. O-linked (GlcNAc) threonine glycosylation is found at Thr3, Thr5, and Thr9. The chain crosses the membrane as a helical span at residues 24–46; it reads TVQTVGMTLATILFLLGILIVIS. Residues 47 to 80 are Cytoplasmic-facing; sequence KKVKCRKADSRSESPTCKSCKSELPSSAPGGGGV. Residues 54–80 are disordered; sequence ADSRSESPTCKSCKSELPSSAPGGGGV. Ser73 carries the post-translational modification Phosphoserine.

The protein belongs to the FXYD family. Regulatory subunit of the sodium/potassium-transporting ATPase which is composed of a catalytic alpha subunit, a non-catalytic beta subunit and a FXYD regulatory unit that modulates the enzymatic activity in a tissue- and isoform-specific way by changing affinities of the Na+/K+-ATPase toward Na(+), K(+) or ATP. In terms of processing, O-glycosylated; required for stabilization and translocation to the plasma membrane.

It is found in the cell membrane. Its function is as follows. Associates with and regulates the activity of the sodium/potassium-transporting ATPase (NKA) which catalyzes the hydrolysis of ATP coupled with the exchange of Na(+) and K(+) ions across the plasma membrane. Reduces the apparent affinity for external K(+), an effect that depends on the presence of external Na(+) and voltage. Increases the apparent affinity for intracellular Na(+). This Homo sapiens (Human) protein is FXYD domain-containing ion transport regulator 7 (FXYD7).